A 231-amino-acid chain; its full sequence is Cytochrome c oxidase subunit 2 (231 aa).

Residues M1–S14 are Mitochondrial intermembrane-facing. A helical membrane pass occupies residues P15 to M45. Topologically, residues L46–Q59 are mitochondrial matrix. The helical transmembrane segment at E60–T87 threads the bilayer. The Mitochondrial intermembrane segment spans residues D88 to L231. The Cu cation site is built by H161, C196, E198, C200, H204, and M207. Residue E198 coordinates Mg(2+).

It belongs to the cytochrome c oxidase subunit 2 family. As to quaternary structure, component of the cytochrome c oxidase (complex IV, CIV), a multisubunit enzyme composed of 14 subunits. The complex is composed of a catalytic core of 3 subunits MT-CO1, MT-CO2 and MT-CO3, encoded in the mitochondrial DNA, and 11 supernumerary subunits COX4I, COX5A, COX5B, COX6A, COX6B, COX6C, COX7A, COX7B, COX7C, COX8 and NDUFA4, which are encoded in the nuclear genome. The complex exists as a monomer or a dimer and forms supercomplexes (SCs) in the inner mitochondrial membrane with NADH-ubiquinone oxidoreductase (complex I, CI) and ubiquinol-cytochrome c oxidoreductase (cytochrome b-c1 complex, complex III, CIII), resulting in different assemblies (supercomplex SCI(1)III(2)IV(1) and megacomplex MCI(2)III(2)IV(2)). Found in a complex with TMEM177, COA6, COX18, COX20, SCO1 and SCO2. Interacts with TMEM177 in a COX20-dependent manner. Interacts with COX20. Interacts with COX16. Cu cation is required as a cofactor.

The protein localises to the mitochondrion inner membrane. The catalysed reaction is 4 Fe(II)-[cytochrome c] + O2 + 8 H(+)(in) = 4 Fe(III)-[cytochrome c] + 2 H2O + 4 H(+)(out). Component of the cytochrome c oxidase, the last enzyme in the mitochondrial electron transport chain which drives oxidative phosphorylation. The respiratory chain contains 3 multisubunit complexes succinate dehydrogenase (complex II, CII), ubiquinol-cytochrome c oxidoreductase (cytochrome b-c1 complex, complex III, CIII) and cytochrome c oxidase (complex IV, CIV), that cooperate to transfer electrons derived from NADH and succinate to molecular oxygen, creating an electrochemical gradient over the inner membrane that drives transmembrane transport and the ATP synthase. Cytochrome c oxidase is the component of the respiratory chain that catalyzes the reduction of oxygen to water. Electrons originating from reduced cytochrome c in the intermembrane space (IMS) are transferred via the dinuclear copper A center (CU(A)) of subunit 2 and heme A of subunit 1 to the active site in subunit 1, a binuclear center (BNC) formed by heme A3 and copper B (CU(B)). The BNC reduces molecular oxygen to 2 water molecules using 4 electrons from cytochrome c in the IMS and 4 protons from the mitochondrial matrix. This chain is Cytochrome c oxidase subunit 2 (MT-CO2), found in Aotus nigriceps (Black-headed night monkey).